The primary structure comprises 131 residues: MFLLHTMIRVGDLDKSLQFYCDILGMNLLRKKDYPSGEFTLAFVGYGKESENAVIELTHNWGTDKYDLGNGFGHIALGVEDIYSTCDKIRDKGGKVVREPGPMKHGTTVIAFVEDPDGYKIELIQTSSKKD.

Positions 2–126 (FLLHTMIRVG…DGYKIELIQT (125 aa)) constitute a VOC domain. Histidine 5 is a binding site for Ni(2+). Position 9 (arginine 9) interacts with substrate. A Ni(2+)-binding site is contributed by glutamate 56. Substrate contacts are provided by asparagine 60 and histidine 74. The Ni(2+) site is built by histidine 74 and glutamate 122. The active-site Proton donor/acceptor is glutamate 122.

The protein belongs to the glyoxalase I family. It depends on Ni(2+) as a cofactor.

The catalysed reaction is (R)-S-lactoylglutathione = methylglyoxal + glutathione. It participates in secondary metabolite metabolism; methylglyoxal degradation; (R)-lactate from methylglyoxal: step 1/2. Catalyzes the conversion of hemimercaptal, formed from methylglyoxal and glutathione, to S-lactoylglutathione. This is Probable lactoylglutathione lyase (gloA) from Synechocystis sp. (strain ATCC 27184 / PCC 6803 / Kazusa).